The chain runs to 57 residues: DELTA-limacoditoxin(2)-Dv11 (57 aa).

Residues 1–24 (MKFAKTFLLLFVVLLLLSIVMAEP) form the signal peptide.

The protein belongs to the limacoditoxin-2 (cecropin-like) family. Expressed by the venom secretory cell of the spine. The spine is a cuticular structure containing a single large nucleated venom-secreting cell at its base. It is an independent unit capable of producing, storing and injecting venom. On the back of D.vulnerans caterpillars, spines are grouped together by 50 to 100 to form scoli, of which there are eight in D.vulnerans.

The protein localises to the secreted. Peptide that induces pain in mammals and has insecticidal, antibacterial and antiparasitic activities. Induces partially reversible paralysis in D.melanogaster when tested at high doses. Shows a moderate antiparasitic activity against the major pathogenic nematode of ruminants (H.contortus, EC(50)=30.5 uM). Has potent or moderate antibacterial activities against A.baumannii (MIC&lt;0.25 ug/mL) and S.aureus (MIC=16 ug/mL). Has no activity on the other bacteria tested, nor on the fungus C.albicans. Strongly induces the increase of intracellular calcium in mice DRG neurons, which is a proxy for neuronal activation that would occur during nociception. This increase is due to influx of extracellular calcium, suggesting that the peptide forms pore or channel in neuronal cell membranes. In addition, intraplantar injection in mice provokes nocifensive behavior, suggesting a pain-inducing activity. The chain is DELTA-limacoditoxin(2)-Dv11 from Doratifera vulnerans (Mottled cup moth).